The following is a 416-amino-acid chain: Enterobactin exporter EntS (416 aa).

Residues 1 to 21 lie on the Cytoplasmic side of the membrane; the sequence is MNKQSWLLNLSLLKTHPAFRA. A helical transmembrane segment spans residues 22–42; sequence VFLARFISIVSLGLLGVAVPV. At 43-55 the chain is on the periplasmic side; the sequence is QIQMMTHSTWQVG. The chain crosses the membrane as a helical span at residues 56–76; that stretch reads LSVTLTGGAMFVGLMVGGVLA. The Cytoplasmic segment spans residues 77-83; the sequence is DRYERKK. A helical transmembrane segment spans residues 84–104; the sequence is VILLARGTCGIGFIGLCLNAL. Residues 105–109 lie on the Periplasmic side of the membrane; that stretch reads LPEPS. The helical transmembrane segment at 110–130 threads the bilayer; it reads LLAIYLLGLWDGFFASLGVTA. At 131–156 the chain is on the cytoplasmic side; sequence LLAATPALVGRENLMQAGAITMLTVR. Residues 157–177 form a helical membrane-spanning segment; the sequence is LGSVISPMIGGLLLATGGVAW. Asn178 is a topological domain (periplasmic). The helical transmembrane segment at 179 to 199 threads the bilayer; sequence YGLAAAGTFITLLPLLSLPAL. Over 200–218 the chain is Cytoplasmic; sequence PPPPQPREHPLKSLLAGFR. Residues 219-239 traverse the membrane as a helical segment; it reads FLLASPLVGGIALLGGLLTMA. At 240–256 the chain is on the periplasmic side; sequence SAVRVLYPALADNWQMS. The helical transmembrane segment at 257-277 threads the bilayer; the sequence is AAQIGFLYAAIPLGAAIGALT. Topologically, residues 278–287 are cytoplasmic; it reads SGKLAHSVRP. A helical transmembrane segment spans residues 288–307; sequence GLLMLLSTLGAFLAIGLFGL. Residues 308-313 lie on the Periplasmic side of the membrane; the sequence is MPMWIL. Residues 314–336 traverse the membrane as a helical segment; it reads GVVCLALFGWLSAVSSLLQYTML. Over 337 to 356 the chain is Cytoplasmic; it reads QTQTPEAMLGRINGLWTAQN. Residues 357-377 traverse the membrane as a helical segment; that stretch reads VTGDAIGAALLGGLGAMMTPV. A topological domain (periplasmic) is located at residue Ala378. The chain crosses the membrane as a helical span at residues 379–399; it reads SASASGFGLLIIGVLLLLVLV. At 400–416 the chain is on the cytoplasmic side; sequence ELRRFRQTPPQVTASGS.

It belongs to the major facilitator superfamily. EntS (TC 2.A.1.38) family.

The protein resides in the cell inner membrane. Functionally, component of an export pathway for enterobactin. This chain is Enterobactin exporter EntS, found in Escherichia coli O6:K15:H31 (strain 536 / UPEC).